A 510-amino-acid chain; its full sequence is Insulinoma-associated protein 1 (510 aa).

A compositionally biased stretch (basic residues) spans 1-12 (MPRGFLVKRSKK). Positions 1–20 (MPRGFLVKRSKKSTPVSYRV) are SNAG domain. 2 disordered regions span residues 1–110 (MPRG…SREH) and 176–226 (GAEA…PKAI). Positions 2–7 (PRGFLV) are required and sufficient for interaction with KDM1A. Residues 43–58 (PPAPSPVPGPLPPPPP) form a necessary for interaction with CCND1 region. The segment covering 43 to 59 (PPAPSPVPGPLPPPPPA) has biased composition (pro residues). Composition is skewed to low complexity over residues 64–74 (AALAAALACAP) and 209–218 (EPPAKAVKAP). The C2H2-type 1; atypical zinc-finger motif lies at 267–287 (FICQLCKEEYADPFALAQHKC). The C2H2-type 2 zinc-finger motif lies at 295-317 (YRCPECAKVFSCPANLASHRRWH). A disordered region spans residues 315–362 (RWHKPRPAPAAARAPEPEAAARAEAREAPGGGSDRDTPSPGGVSESGS). Over residues 329 to 351 (PEPEAAARAEAREAPGGGSDRDT) the composition is skewed to basic and acidic residues. C2H2-type zinc fingers lie at residues 367–389 (YECH…LLAH), 441–464 (HLCP…RLLH), and 469–492 (FPCK…NKCH).

The protein belongs to the INSM1 family. Interacts (via the SNAG domain) with HDAC1. Interacts (via the SNAG domain) with HDAC2. Interacts (via the SNAG domain) with KDM1A. Interacts (via the SNAG domain) with RCOR1. Interacts with SORBS1. Interacts (via the N-terminal region) with CCND1 (via cyclin N-terminal domain); the interaction competes with the binding of CCND1 to CDK4 during cell cycle progression and increases its transcriptional repressor activity. Interacts with HDAC3; the interaction increases its transcriptional repressor activity. As to expression, expressed in pancreatic duct cells. Expressed in several tumor cell lines of neuroendocrine origin including pheochromocytoma, medullary thyroid carcinoma, insulinoma, medulloblastoma, retinoblastoma, pheochromacytoma, medullary thyroid carcinoma and small cell lung carcinoma.

It is found in the nucleus. Functionally, sequence-specific DNA-binding transcriptional regulator that plays a key role in neurogenesis and neuroendocrine cell differentiation during embryonic and/or fetal development. Binds to the consensus sequence 5'-[TG][TC][TC][TT][GA]GGG[CG]A-3' in target promoters. Acts as a transcriptional repressor of NEUROD1 and INS expression via its interaction with cyclin CCND1 in a cell cycle-independent manner. Negatively regulates skeletal muscle-specific gene expression in endocrine cells of the pituitary by inhibiting the Notch signaling pathway. Represses target gene transcription by recruiting chromatin-modifying factors, such as HDAC1, HDAC2, HDAC3, KDM1A and RCOR1 histone deacetylases. Binds to its own promoter, suggesting autoregulation as a self-control feedback mechanism. Competes with histone H3 for the same binding site on the histone demethylase complex formed by KDM1A and RCOR1, and thereby inhibits demethylation of histone H3 at 'Lys-4'. Promotes the generation and expansion of neuronal basal progenitor cells in the developing neocortex. Involved in the differentiation of endocrine cells of the developing anterior pituitary gland, of the pancreas and intestine, and of sympatho-adrenal cells in the peripheral nervous system. Promotes cell cycle signaling arrest and inhibition of cellular proliferation. The chain is Insulinoma-associated protein 1 (INSM1) from Homo sapiens (Human).